A 1548-amino-acid chain; its full sequence is Nuclear factor of activated T-cells 5 (1548 aa).

A disordered region spans residues Gln-54–Ser-106. The segment covering Val-81–Ser-106 has biased composition (low complexity). Ser-137 is subject to Phosphoserine. At Lys-139 the chain carries N6-acetyllysine. Residues Leu-141–Ser-151 show a composition bias toward polar residues. Disordered regions lie at residues Leu-141–Gly-180, Trp-192–Ser-237, and Thr-258–Lys-282. Ser-151 is subject to Phosphoserine. Phosphothreonine; by CDK5 is present on Thr-152. Ser-172 is modified (phosphoserine). Positions Ser-196–Asn-209 are enriched in low complexity. Positions Lys-217–Val-229 are enriched in basic residues. The span at Thr-258–Gly-277 shows a compositional bias: polar residues. Positions Lys-281 to Gly-460 constitute an RHD domain. Residues Arg-310 to Gly-317 mediate DNA binding. Lys-572 participates in a covalent cross-link: Glycyl lysine isopeptide (Lys-Gly) (interchain with G-Cter in SUMO1); alternate. Lys-572 participates in a covalent cross-link: Glycyl lysine isopeptide (Lys-Gly) (interchain with G-Cter in SUMO2); alternate. Ser-577 bears the Phosphoserine mark. Lys-619 is covalently cross-linked (Glycyl lysine isopeptide (Lys-Gly) (interchain with G-Cter in SUMO2)). Disordered regions lie at residues Gly-659 to Gln-682, Thr-750 to Val-777, Pro-851 to Gln-892, Ser-970 to Ala-1010, Leu-1097 to Pro-1127, and Met-1257 to Gln-1388. Composition is skewed to low complexity over residues Ser-662–Ser-672 and Glu-751–Gln-765. Composition is skewed to polar residues over residues Ile-766–Val-777, Pro-851–Ala-860, and Val-876–Ser-886. Positions Thr-979–Thr-993 are enriched in low complexity. A compositionally biased stretch (polar residues) spans Val-1113 to Pro-1127. Positions Gln-1264–Gln-1283 are enriched in low complexity. Composition is skewed to polar residues over residues Ser-1284–Lys-1300 and Phe-1308–Ala-1333. Residues Pro-1334–Pro-1348 are compositionally biased toward low complexity. Residues Thr-1349–Gln-1388 are compositionally biased toward polar residues.

Homodimer when bound to DNA, completely encircles its DNA target. Interacts with CIDEC; this interaction is direct and retains NFAT5 in the cytoplasm. Does not bind with Fos and Jun transcription factors. Interacts with DDX5 and DDX17; this interaction leads to DDX5/DDX17 recruitment to LNC2 and S100A4 promoters and NFAT5-mediated DDX5/DDX17-enhanced transactivation. Phosphorylated. Phosphorylated at Thr-152 by CDK5 in response to osmotic stress; this phosphorylation mediates its rapid nuclear localization. In terms of processing, poly-ADP-ribosylated by PARP1 in response to DNA damage, promoting recruitment to sites of R-loop-associated DNA damage.

The protein localises to the nucleus. It localises to the cytoplasm. Its subcellular location is the chromosome. In terms of biological role, transcription factor involved, among others, in the transcriptional regulation of osmoprotective and inflammatory genes. Binds the DNA consensus sequence 5'-[ACT][AG]TGGAAA[CAT]A[TA][ATC][CA][ATG][GT][GAC][CG][CT]-3'. Mediates the transcriptional response to hypertonicity. Positively regulates the transcription of LCN2 and S100A4 genes; optimal transactivation of these genes requires the presence of DDX5/DDX17. Also involved in the DNA damage response by preventing formation of R-loops; R-loops are composed of a DNA:RNA hybrid and the associated non-template single-stranded DNA. The protein is Nuclear factor of activated T-cells 5 (Nfat5) of Rattus norvegicus (Rat).